Consider the following 228-residue polypeptide: Pyridoxamine 5'-phosphate oxidase (228 aa).

20-23 (QYDK) provides a ligand contact to pyridoxal 5'-phosphate. Lys29 is covalently cross-linked (Glycyl lysine isopeptide (Lys-Gly) (interchain with G-Cter in ubiquitin)). Position 73 to 76 (73 to 76 (RILL)) interacts with FMN. Residue Lys78 participates in pyridoxal 5'-phosphate binding. Residues 88-89 (YS), 95-96 (RK), and Gln118 contribute to the FMN site. Pyridoxal 5'-phosphate-binding residues include Tyr136, Arg140, and Ser144. FMN-binding positions include 153–154 (QS) and Trp199. Residue 205-207 (RLH) participates in pyridoxal 5'-phosphate binding. Arg209 contributes to the FMN binding site.

It belongs to the pyridoxamine 5'-phosphate oxidase family. As to quaternary structure, homodimer. FMN serves as cofactor.

The protein resides in the mitochondrion intermembrane space. It catalyses the reaction pyridoxamine 5'-phosphate + O2 + H2O = pyridoxal 5'-phosphate + H2O2 + NH4(+). The catalysed reaction is pyridoxine 5'-phosphate + O2 = pyridoxal 5'-phosphate + H2O2. Its pathway is cofactor metabolism; pyridoxal 5'-phosphate salvage; pyridoxal 5'-phosphate from pyridoxamine 5'-phosphate: step 1/1. It participates in cofactor metabolism; pyridoxal 5'-phosphate salvage; pyridoxal 5'-phosphate from pyridoxine 5'-phosphate: step 1/1. Catalyzes the oxidation of either pyridoxine 5'-phosphate (PNP) or pyridoxamine 5'-phosphate (PMP) into pyridoxal 5'-phosphate (PLP). In Saccharomyces cerevisiae (strain ATCC 204508 / S288c) (Baker's yeast), this protein is Pyridoxamine 5'-phosphate oxidase (PDX3).